Consider the following 341-residue polypeptide: Phenylalanine--tRNA ligase alpha subunit (341 aa).

Residue E254 coordinates Mg(2+).

Belongs to the class-II aminoacyl-tRNA synthetase family. Phe-tRNA synthetase alpha subunit type 1 subfamily. As to quaternary structure, tetramer of two alpha and two beta subunits. It depends on Mg(2+) as a cofactor.

The protein resides in the cytoplasm. The catalysed reaction is tRNA(Phe) + L-phenylalanine + ATP = L-phenylalanyl-tRNA(Phe) + AMP + diphosphate + H(+). In Chlorobaculum tepidum (strain ATCC 49652 / DSM 12025 / NBRC 103806 / TLS) (Chlorobium tepidum), this protein is Phenylalanine--tRNA ligase alpha subunit.